The primary structure comprises 129 residues: uncharacterized protein (129 aa).

Residues Ser-85 to Asp-108 show a composition bias toward low complexity. A disordered region spans residues Ser-85 to Pro-110.

This is an uncharacterized protein from Microplitis demolitor (Parasitoid wasp).